Reading from the N-terminus, the 1746-residue chain is Non-reducing polyketide synthase ptaA (1746 aa).

The N-terminal acylcarrier protein transacylase domain (SAT) stretch occupies residues 4-227 (NSGSGTSPWG…ALPVYGGLCH (224 aa)). A Ketosynthase family 3 (KS3) domain is found at 361-796 (QSKIAIVGMS…GGNTTIAIEE (436 aa)). Active-site for beta-ketoacyl synthase activity residues include C534, H670, and H714. Residues 898 to 1218 (FAFTGQGASY…LGALHLAGIP (321 aa)) form a malonyl-CoA:ACP transacylase (MAT) domain region. The segment at 1286-1605 (TSTVHRVIGE…RLLLDRFFSA (320 aa)) is product template (PT) domain. Residues 1290-1425 (HRVIGETFDG…ATLFYGKAND (136 aa)) are N-terminal hotdog fold. Positions 1290–1600 (HRVIGETFDG…FRRYPRLLLD (311 aa)) constitute a PKS/mFAS DH domain. The active-site Proton acceptor; for dehydratase activity is the H1322. Positions 1452-1600 (VANRFSRNMA…FRRYPRLLLD (149 aa)) are C-terminal hotdog fold. D1511 acts as the Proton donor; for dehydratase activity in catalysis. A Carrier domain is found at 1671-1745 (DSITVKAMAL…DLRAWLLEYY (75 aa)). Position 1705 is an O-(pantetheine 4'-phosphoryl)serine (S1705).

The enzyme catalyses holo-[ACP] + 8 malonyl-CoA + 8 H(+) = atrochrysone carboxyl-[ACP] + 8 CO2 + 8 CoA + 2 H2O. Its pathway is secondary metabolite biosynthesis. Its function is as follows. Non-reducing polyketide synthase; part of the gene cluster that mediates the biosynthesis of pestheic acid, a diphenyl ether which is a biosynthetic precursor of the unique chloropupukeananes. The biosynthesis initiates from condensation of acetate and malonate units catalyzed by the non-reducing PKS ptaA. As the ptaA protein is TE/CLC domain-deficient, hydrolysis and Claisen cyclization of the polyketide could be catalyzed by ptaB containing a beta-lactamase domain. The ptaB protein might hydrolyze the thioester bond between the ACP of ptaA and the intermediate to release atrochrysone carboxylic acid, which is spontaneously dehydrated to form endocrocin anthrone. Endocrocin anthrone is then converted to endocrocin, catalyzed by the anthrone oxygenase ptaC. Spontaneous decarboxylation of endocrocin occurs to generate emodin. An O-methyltransferase (ptaH or ptaI) could methylate emodin to form physcion. PtaJ could then catalyze the oxidative cleavage of physcion, and rotation of the intermediate could then afford desmethylisosulochrin. PtaF, a putative NADH-dependent oxidoreductase, might also participate in the oxidative cleavage step. Desmethylisosulochrin is then transformed by another O-methyltransferase (ptaH or ptaI) to form isosulochrin. Chlorination of isosulochrin by ptaM in the cyclohexadienone B ring then produces chloroisosulochrin. PtaE is responsible for the oxidative coupling reactions of both benzophenones isosulochrin and chloroisosulochrin to RES-1214-1 and pestheic acid respectively, regardless of chlorination. The polypeptide is Non-reducing polyketide synthase ptaA (Pestalotiopsis fici (strain W106-1 / CGMCC3.15140)).